Reading from the N-terminus, the 236-residue chain is Glucosamine-6-phosphate deaminase (236 aa).

Asp-67 (proton acceptor; for enolization step) is an active-site residue. Asn-136 serves as the catalytic For ring-opening step. His-138 acts as the Proton acceptor; for ring-opening step in catalysis. Residue Glu-143 is the For ring-opening step of the active site.

The protein belongs to the glucosamine/galactosamine-6-phosphate isomerase family. NagB subfamily.

It carries out the reaction alpha-D-glucosamine 6-phosphate + H2O = beta-D-fructose 6-phosphate + NH4(+). It functions in the pathway amino-sugar metabolism; N-acetylneuraminate degradation; D-fructose 6-phosphate from N-acetylneuraminate: step 5/5. In terms of biological role, catalyzes the reversible isomerization-deamination of glucosamine 6-phosphate (GlcN6P) to form fructose 6-phosphate (Fru6P) and ammonium ion. This is Glucosamine-6-phosphate deaminase from Lachnoclostridium phytofermentans (strain ATCC 700394 / DSM 18823 / ISDg) (Clostridium phytofermentans).